The primary structure comprises 948 residues: Probable DNA-directed RNA polymerase (948 aa).

Residues Asp-600, Lys-680, and Asp-853 contribute to the active site.

Belongs to the phage and mitochondrial RNA polymerase family.

The protein localises to the mitochondrion. It catalyses the reaction RNA(n) + a ribonucleoside 5'-triphosphate = RNA(n+1) + diphosphate. Functionally, DNA-dependent RNA polymerase catalyzes the transcription of DNA into RNA using the four ribonucleoside triphosphates as substrates. The polypeptide is Probable DNA-directed RNA polymerase (Podospora anserina (Pleurage anserina)).